Consider the following 168-residue polypeptide: MLLYKDVISGDELVSDAYDLKEVDDIVYEADCQMVTVKQGGDVDIGANPSAEDAEENAEEGTETVNNLVYSFRLSPTSFDKKSYMSYIKGYMKAIKARLQESNPERVPVFEKNAIGFVKKILANFKDYDFYIGESMDPDAMVVLMNYREDGITPYMIFFKDGLVSEKF.

In terms of domain architecture, TCTP spans 1–168; it reads MLLYKDVISG…FKDGLVSEKF (168 aa). Ser78 is subject to Phosphoserine.

This sequence belongs to the TCTP family.

It is found in the cytoplasm. Functionally, involved in calcium binding and microtubule stabilization. May be a guanine nucleotide-free chaperone (GFC). The protein is Translationally-controlled tumor protein homolog (p23fy) of Schizosaccharomyces pombe (strain 972 / ATCC 24843) (Fission yeast).